Consider the following 140-residue polypeptide: Transmembrane protein 107 (140 aa).

2 helical membrane passes run 7–27 (LVPSRFLTLLAHLVVVITLFW) and 53–73 (LVAALSVTLGLFAVELAGFLS). The N-linked (GlcNAc...) asparagine glycan is linked to N79. 2 helical membrane passes run 83-103 (SLISIGAHCSASVALSFFIFE) and 113-133 (IFVFCSALPAVTEMALFVTVF).

As to quaternary structure, part of the tectonic-like complex (also named B9 complex). Interacts with TMEM237, TMEM231, MKS1 and TMEM216.

The protein localises to the membrane. It is found in the cell projection. The protein resides in the cilium. Functionally, plays a role in cilia formation and embryonic patterning. Requires for normal Sonic hedgehog (Shh) signaling in the neural tube and acts in combination with GLI2 and GLI3 to pattern ventral and intermediate neuronal cell types. During ciliogenesis regulates the ciliary transition zone localization of some MKS complex proteins. This is Transmembrane protein 107 from Homo sapiens (Human).